We begin with the raw amino-acid sequence, 305 residues long: Ornithine carbamoyltransferase (305 aa).

Residues 52 to 55 (STRT), Gln-79, Arg-103, and 130 to 133 (HPCQ) contribute to the carbamoyl phosphate site. Residues Asn-161, Asp-221, and 225–226 (SM) contribute to the L-ornithine site. Residues 261–262 (CL) and Arg-289 contribute to the carbamoyl phosphate site.

This sequence belongs to the aspartate/ornithine carbamoyltransferase superfamily. OTCase family.

Its subcellular location is the cytoplasm. It catalyses the reaction carbamoyl phosphate + L-ornithine = L-citrulline + phosphate + H(+). It functions in the pathway amino-acid biosynthesis; L-arginine biosynthesis; L-arginine from L-ornithine and carbamoyl phosphate: step 1/3. Functionally, reversibly catalyzes the transfer of the carbamoyl group from carbamoyl phosphate (CP) to the N(epsilon) atom of ornithine (ORN) to produce L-citrulline. The chain is Ornithine carbamoyltransferase from Methanocorpusculum labreanum (strain ATCC 43576 / DSM 4855 / Z).